A 3574-amino-acid polypeptide reads, in one-letter code: Chromatin structure-remodeling complex protein SYD (3574 aa).

3 disordered regions span residues Ser76–Asn105, Thr123–Asp211, and Asp328–Ser372. Composition is skewed to polar residues over residues Ser124–Arg148 and Pro155–His168. Residues Asn169–Ser181 are compositionally biased toward basic and acidic residues. Polar residues predominate over residues Trp194 to Phe204. Residues Arg358–Ser372 show a composition bias toward basic and acidic residues. The 75-residue stretch at Gln573–Ile647 folds into the HSA domain. Residues Val766–Asn933 form the Helicase ATP-binding domain. Asp779–Thr786 contacts ATP. Positions Asp884 to His887 match the DEAH box motif. Residues Met1077–Thr1223 form the Helicase C-terminal domain. The Nuclear localization signal signature appears at Ala1266–Asp1273. Disordered regions lie at residues Lys1342–Thr1472, His1500–Glu1575, Ile1588–His1637, Gly1690–Val1811, Gln1830–Asp1868, Ser2040–Asn2068, Ser2089–Val2115, Ser2143–Ile2162, Leu2179–Asp2220, Glu2235–Asp2338, Glu2350–Asp2451, Phe2517–Glu2538, Ser2684–Asp2703, Ile2718–Arg2759, Asp2865–Leu2884, Glu3017–Ser3045, Asn3189–Lys3208, Val3316–Met3337, and Thr3512–Val3574. Positions Ala1362–Lys1371 are enriched in basic and acidic residues. Polar residues-rich tracts occupy residues Ser1399 to Thr1426 and His1500 to Asp1511. The span at Gly1532–Gly1546 shows a compositional bias: basic residues. Composition is skewed to polar residues over residues Gly1555–Ala1571 and Glu1597–Thr1614. Residues Arg1617–Asp1627 show a composition bias toward basic and acidic residues. 6 stretches are compositionally biased toward polar residues: residues Gly1690 to Ser1699, Lys1706 to Glu1752, Asp1796 to Thr1806, His1832 to Gln1849, Ser2040 to Ala2057, and Ser2090 to Ser2110. Acidic residues predominate over residues Asp2248 to Val2260. The segment covering Asp2438–Asp2451 has biased composition (basic and acidic residues). Residues Ile2718–Gln2735 show a composition bias toward polar residues. Polar residues-rich tracts occupy residues Lys3034–Ser3045 and Asp3191–Ser3204. A compositionally biased stretch (basic and acidic residues) spans Lys3523–Gly3538.

The protein belongs to the SNF2/RAD54 helicase family. Interacts with LFY. Binds to BARD1/ROW1. Post-translationally, phosphorylated. As to expression, mostly expressed in rapidly dividing cells in the vegetative, inflorescence, and root meristems, as well as in young leaf and flower primordia. Isoform 1 is predominantly found in seedlings whereas isoform 2 is present in both seedlings and inflorescences (at protein level).

Its subcellular location is the cytoplasm. The protein localises to the nucleus. Its function is as follows. Catalytic component of the chromatin structure-remodeling complex (RSC), which is involved in transcription regulation and nucleosome positioning. Controls stem cell fate via the transcription regulation of WUS in the shoot apical meristem, by modulating its promoter. LFY-dependent repressor of the meristem identity switch from vegetative to reproductive development probably by modulating chromatin state. Involved in the regulation of floral homeotic gene expression in response to environmental stimuli. Required for carpel and ovule development, and for cotyledon separation via the regulation of CUC2 transcription. Regulates the promoters of several genes downstream of the jasmonate (JA) and ethylene (ET) signaling pathways. Required for resistance against the necrotrophic pathogen B.cinerea but not the biotrophic pathogen P.syringae. The sequence is that of Chromatin structure-remodeling complex protein SYD (SYD) from Arabidopsis thaliana (Mouse-ear cress).